Reading from the N-terminus, the 272-residue chain is Shikimate dehydrogenase (NADP(+)) (272 aa).

Shikimate is bound by residues 16 to 18 (SLS) and Thr63. Lys67 (proton acceptor) is an active-site residue. Glu79 contributes to the NADP(+) binding site. Residues Asn88 and Asp103 each contribute to the shikimate site. NADP(+) is bound by residues 127 to 131 (GAGGA), 151 to 156 (NRTMSR), and Ile212. Shikimate is bound at residue Tyr214. Gly235 is an NADP(+) binding site.

The protein belongs to the shikimate dehydrogenase family. As to quaternary structure, homodimer.

It catalyses the reaction shikimate + NADP(+) = 3-dehydroshikimate + NADPH + H(+). The protein operates within metabolic intermediate biosynthesis; chorismate biosynthesis; chorismate from D-erythrose 4-phosphate and phosphoenolpyruvate: step 4/7. Involved in the biosynthesis of the chorismate, which leads to the biosynthesis of aromatic amino acids. Catalyzes the reversible NADPH linked reduction of 3-dehydroshikimate (DHSA) to yield shikimate (SA). The polypeptide is Shikimate dehydrogenase (NADP(+)) (Staphylococcus epidermidis (strain ATCC 12228 / FDA PCI 1200)).